The chain runs to 582 residues: ATP-dependent lipid A-core flippase (582 aa).

5 helical membrane passes run L16–I36, V63–F83, I153–V173, P253–P273, and V275–M295. One can recognise an ABC transmembrane type-1 domain in the interval A28–R310. Residues L342–M578 form the ABC transporter domain. G376 to S383 contacts ATP.

The protein belongs to the ABC transporter superfamily. Lipid exporter (TC 3.A.1.106) family. Homodimer.

The protein resides in the cell inner membrane. The catalysed reaction is ATP + H2O + lipid A-core oligosaccharideSide 1 = ADP + phosphate + lipid A-core oligosaccharideSide 2.. Its function is as follows. Involved in lipopolysaccharide (LPS) biosynthesis. Translocates lipid A-core from the inner to the outer leaflet of the inner membrane. Transmembrane domains (TMD) form a pore in the inner membrane and the ATP-binding domain (NBD) is responsible for energy generation. The sequence is that of ATP-dependent lipid A-core flippase from Pectobacterium atrosepticum (strain SCRI 1043 / ATCC BAA-672) (Erwinia carotovora subsp. atroseptica).